A 1615-amino-acid polypeptide reads, in one-letter code: DNA-directed RNA polymerase I subunit rpa1 (1615 aa).

Zn(2+)-binding residues include C65, C68, C75, and H78. A disordered region spans residues 155–181; the sequence is GKSNEEGEEVMESDESDSDKMDTDENK. A compositionally biased stretch (acidic residues) spans 160–171; it reads EGEEVMESDESD. The span at 172–181 shows a compositional bias: basic and acidic residues; the sequence is SDKMDTDENK. Positions 593, 595, and 597 each coordinate Mg(2+). The tract at residues 955–967 is bridging helix; that stretch reads PQDYFFHCMAGRE. Residues 1305-1316 are compositionally biased toward acidic residues; it reads DSLTINDDDAPA. Positions 1305 to 1411 are disordered; that stretch reads DSLTINDDDA…NSRSSNSFSD (107 aa). The segment covering 1317-1336 has biased composition (low complexity); the sequence is NDDTTNNDENTSQQQPSSQN. Acidic residues predominate over residues 1366-1399; sequence EDGEEEAEEKDSDEGESEAEESDDKSDVDSDSDE. Residues 1400-1411 show a composition bias toward low complexity; sequence ISNSRSSNSFSD.

Belongs to the RNA polymerase beta' chain family. In terms of assembly, component of the RNA polymerase I (Pol I) complex consisting of at least 13 subunits.

The protein localises to the nucleus. It catalyses the reaction RNA(n) + a ribonucleoside 5'-triphosphate = RNA(n+1) + diphosphate. DNA-dependent RNA polymerase catalyzes the transcription of DNA into RNA using the four ribonucleoside triphosphates as substrates. Largest and catalytic core component of RNA polymerase I which synthesizes ribosomal RNA precursors. Forms the polymerase active center together with the second largest subunit. A single stranded DNA template strand of the promoter is positioned within the central active site cleft of Pol I. A bridging helix emanates from RPA1 and crosses the cleft near the catalytic site and is thought to promote translocation of Pol I by acting as a ratchet that moves the RNA-DNA hybrid through the active site by switching from straight to bent conformations at each step of nucleotide addition. The protein is DNA-directed RNA polymerase I subunit rpa1 (polr1a) of Dictyostelium discoideum (Social amoeba).